Consider the following 322-residue polypeptide: Phosphatidylserine decarboxylase proenzyme (322 aa).

Residues aspartate 90, histidine 147, and serine 254 each act as charge relay system; for autoendoproteolytic cleavage activity in the active site. Serine 254 acts as the Schiff-base intermediate with substrate; via pyruvic acid; for decarboxylase activity in catalysis. Serine 254 bears the Pyruvic acid (Ser); by autocatalysis mark. Positions 292–322 are disordered; sequence TPDAEPSPLPAEEIEAEHDASPLVDDKKDQV. Over residues 308 to 322 the composition is skewed to basic and acidic residues; that stretch reads EHDASPLVDDKKDQV.

Belongs to the phosphatidylserine decarboxylase family. PSD-B subfamily. Prokaryotic type I sub-subfamily. Heterodimer of a large membrane-associated beta subunit and a small pyruvoyl-containing alpha subunit. The cofactor is pyruvate. Post-translationally, is synthesized initially as an inactive proenzyme. Formation of the active enzyme involves a self-maturation process in which the active site pyruvoyl group is generated from an internal serine residue via an autocatalytic post-translational modification. Two non-identical subunits are generated from the proenzyme in this reaction, and the pyruvate is formed at the N-terminus of the alpha chain, which is derived from the carboxyl end of the proenzyme. The autoendoproteolytic cleavage occurs by a canonical serine protease mechanism, in which the side chain hydroxyl group of the serine supplies its oxygen atom to form the C-terminus of the beta chain, while the remainder of the serine residue undergoes an oxidative deamination to produce ammonia and the pyruvoyl prosthetic group on the alpha chain. During this reaction, the Ser that is part of the protease active site of the proenzyme becomes the pyruvoyl prosthetic group, which constitutes an essential element of the active site of the mature decarboxylase.

Its subcellular location is the cell membrane. The catalysed reaction is a 1,2-diacyl-sn-glycero-3-phospho-L-serine + H(+) = a 1,2-diacyl-sn-glycero-3-phosphoethanolamine + CO2. It functions in the pathway phospholipid metabolism; phosphatidylethanolamine biosynthesis; phosphatidylethanolamine from CDP-diacylglycerol: step 2/2. Catalyzes the formation of phosphatidylethanolamine (PtdEtn) from phosphatidylserine (PtdSer). The polypeptide is Phosphatidylserine decarboxylase proenzyme (Escherichia coli O7:K1 (strain IAI39 / ExPEC)).